Here is a 248-residue protein sequence, read N- to C-terminus: Adenosylcobinamide-GDP ribazoletransferase (248 aa).

Transmembrane regions (helical) follow at residues 30-50, 54-74, 112-132, 134-154, and 188-208; these read LAES…CYAL, VLSG…LTAV, FGAL…DAVI, AGSF…MVLA, and AVSA…LAAG.

It belongs to the CobS family. Requires Mg(2+) as cofactor.

It localises to the cell inner membrane. The catalysed reaction is alpha-ribazole + adenosylcob(III)inamide-GDP = adenosylcob(III)alamin + GMP + H(+). It catalyses the reaction alpha-ribazole 5'-phosphate + adenosylcob(III)inamide-GDP = adenosylcob(III)alamin 5'-phosphate + GMP + H(+). It participates in cofactor biosynthesis; adenosylcobalamin biosynthesis; adenosylcobalamin from cob(II)yrinate a,c-diamide: step 7/7. Its function is as follows. Joins adenosylcobinamide-GDP and alpha-ribazole to generate adenosylcobalamin (Ado-cobalamin). Also synthesizes adenosylcobalamin 5'-phosphate from adenosylcobinamide-GDP and alpha-ribazole 5'-phosphate. This chain is Adenosylcobinamide-GDP ribazoletransferase, found in Syntrophobacter fumaroxidans (strain DSM 10017 / MPOB).